A 487-amino-acid chain; its full sequence is Reticulon-like protein B21 (487 aa).

The span at methionine 1–valine 22 shows a compositional bias: low complexity. Disordered regions lie at residues methionine 1–valine 43, leucine 65–glutamate 86, and lysine 113–serine 149. Residues alanine 26–threonine 38 show a composition bias toward basic and acidic residues. Acidic residues predominate over residues glutamate 118–arginine 143. Residues leucine 230–valine 419 form the Reticulon domain. Transmembrane regions (helical) follow at residues serine 242–leucine 262, phenylalanine 264–leucine 284, isoleucine 354–phenylalanine 374, and valine 413–phenylalanine 433. The span at glutamine 446–lysine 463 shows a compositional bias: acidic residues. The interval glutamine 446–serine 487 is disordered.

The protein localises to the endoplasmic reticulum membrane. This is Reticulon-like protein B21 (RTNLB21) from Arabidopsis thaliana (Mouse-ear cress).